Reading from the N-terminus, the 317-residue chain is Putative 2-hydroxyacid dehydrogenase SAB2178 (317 aa).

NAD(+)-binding positions include 155–156 (EI), 234–236 (ASR), and aspartate 260. Residue arginine 236 is part of the active site. Glutamate 265 is a catalytic residue. The active-site Proton donor is the histidine 283. 283–286 (HIGN) provides a ligand contact to NAD(+).

This sequence belongs to the D-isomer specific 2-hydroxyacid dehydrogenase family.

The polypeptide is Putative 2-hydroxyacid dehydrogenase SAB2178 (Staphylococcus aureus (strain bovine RF122 / ET3-1)).